The primary structure comprises 79 residues: Calcium/calmodulin-dependent protein kinase II inhibitor 2 (79 aa).

The tract at residues 1–21 is disordered; the sequence is MSEILPYSEDKMGRFGADPEG. The inhibitory domain stretch occupies residues 43–69; it reads KRPPKLGQIGRAKRVVIEDDRIDDVLK.

Belongs to the CAMK2N family. Interacts with CAMK2A and CAMK2B in the presence of Ca(2+)/calmodulin or after autophosphorylation.

It is found in the nucleus. Its subcellular location is the cytoplasm. It localises to the cytosol. The protein localises to the synapse. Its function is as follows. Potent and specific cellular inhibitor of CaM-kinase II (CAMK2). Traps Ca(2+)/calmodulin on CAMK2. This is Calcium/calmodulin-dependent protein kinase II inhibitor 2 (CAMK2N2) from Bos taurus (Bovine).